Consider the following 313-residue polypeptide: MTQWYPASPALWQGRDDSIEAPDARRLFQTVTRSEAFFPENWQQKIALMGFACDEGVKRNSGRPGAAGGPDALRKALANMASHQGHERLVDLGNWVAPTPDLEGAQQALRDAVSRCLRAGMRTLVMGGGHETAFGHGAGVLDAFAQESVGIINLDAHLDLRQTDRATSGTPFRQLAQLCDAQSRAFHYACFGVSRAANTQALWREAQWRNVTVVEDLDCHDALAQMTQFIDKVDKIYLTIDLDVLPVWEMPAVSAPAALGVPLIQVLRLIEPVCRSGKLQAADLVEFNPRFDEDGAAARVAARLGWQIAHWWR.

Mn(2+)-binding residues include His130, Asp155, His157, Asp159, Asp241, and Asp243.

Belongs to the arginase family. The cofactor is Mn(2+).

It catalyses the reaction N-formimidoyl-L-glutamate + H2O = formamide + L-glutamate. It functions in the pathway amino-acid degradation; L-histidine degradation into L-glutamate; L-glutamate from N-formimidoyl-L-glutamate (hydrolase route): step 1/1. Catalyzes the conversion of N-formimidoyl-L-glutamate to L-glutamate and formamide. The chain is Formimidoylglutamase from Salmonella typhi.